The chain runs to 568 residues: Protein adenylyltransferase SelO, mitochondrial (568 aa).

8 residues coordinate ATP: Gly120, Gly122, Arg123, Lys144, Asp156, Gly157, Arg208, and Arg215. Asp287 acts as the Proton acceptor in catalysis. Residues Asn288 and Asp297 each coordinate Mg(2+). Asp297 serves as a coordination point for ATP.

Belongs to the SELO family. Mg(2+) serves as cofactor. Post-translationally, forms probably one or more intrachain disulfide bridges.

The protein resides in the mitochondrion. It carries out the reaction L-tyrosyl-[protein] + ATP = O-(5'-adenylyl)-L-tyrosyl-[protein] + diphosphate. In terms of biological role, catalyzes the transfer of adenosine 5'-monophosphate (AMP) to Tyr residues of target mitochondrial proteins (AMPylation). Involved in redox homeostasis by regulating the cellular response to oxidative stress. Regulates protein S-glutathionylation levels possibly by AMPylation of deglutathionylation enzymes such as glutaredoxins. The chain is Protein adenylyltransferase SelO, mitochondrial from Schizosaccharomyces pombe (strain 972 / ATCC 24843) (Fission yeast).